Reading from the N-terminus, the 133-residue chain is Large ribosomal subunit protein uL16 (133 aa).

This sequence belongs to the universal ribosomal protein uL16 family. Part of the 50S ribosomal subunit.

Its function is as follows. Binds 23S rRNA and is also seen to make contacts with the A and possibly P site tRNAs. This is Large ribosomal subunit protein uL16 from Blochmanniella floridana.